The chain runs to 895 residues: La RNA-binding domain-containing protein LHP1 (895 aa).

Disordered regions lie at residues 24–265 (ANGN…PPPS), 285–344 (SATS…HDAT), 359–590 (GEDK…LGHG), 796–857 (PDAA…AQDV), and 870–895 (VNGE…NYEQ). A compositionally biased stretch (low complexity) spans 31–75 (SSPSSSSSATPEPTSLSSSTSGKKAFSTATSKSGQQKQGSSPQPG). Over residues 95–143 (QRTDRSEEKEKRGSSSKNWRERSHRDEKNQDDGEKRNGRERSKKEKGDK) the composition is skewed to basic and acidic residues. Low complexity predominate over residues 152–170 (SATSSEKTAKSLSSSTKNA). Composition is skewed to polar residues over residues 172 to 184 (GVTS…NPIA) and 192 to 216 (KAQN…STIN). Residues 228–244 (DNWRARPAKVEKNEKTE) are compositionally biased toward basic and acidic residues. The segment covering 251–260 (QAQPQPQRQL) has biased composition (low complexity). Basic and acidic residues predominate over residues 296–314 (KSDKEKSLTNGMVKEEDSG). Residues 325-336 (AAAAAAAGTSST) show a composition bias toward low complexity. 4 stretches are compositionally biased toward basic and acidic residues: residues 359-371 (GEDK…ERLN), 405-428 (HAAE…REGG), 452-468 (EGKK…DGHA), and 485-495 (GDVKETKEGDA). A compositionally biased stretch (low complexity) spans 496 to 508 (RSASQQESSSHRS). Over residues 510 to 521 (PSISASANTGID) the composition is skewed to polar residues. The segment covering 563-572 (RGSFGGGRAR) has biased composition (gly residues). Positions 706–796 (VPNLDPLRFY…GAESHRWVLP (91 aa)) constitute an HTH La-type RNA-binding domain. Residue Ser847 is modified to Phosphoserine. Basic and acidic residues predominate over residues 873–884 (EIKEKEEVKAME). Acidic residues predominate over residues 885–895 (NEGEESENYEQ).

May act as an RNA-binding protein. The polypeptide is La RNA-binding domain-containing protein LHP1 (Cryptococcus neoformans var. grubii serotype A (strain H99 / ATCC 208821 / CBS 10515 / FGSC 9487) (Filobasidiella neoformans var. grubii)).